The following is a 320-amino-acid chain: Polyisoprenyl-teichoic acid--peptidoglycan teichoic acid transferase TagU (320 aa).

Residues 1–15 (MVSRTERKQHKKRRK) are Cytoplasmic-facing. A helical; Signal-anchor for type II membrane protein transmembrane segment spans residues 16–36 (WPFWLGGILLVLLLLISGGIF). The Extracellular segment spans residues 37-320 (LIYNQVGAVV…SEITGHMQEQ (284 aa)).

It belongs to the LytR/CpsA/Psr (LCP) family.

Its subcellular location is the cell membrane. It participates in cell wall biogenesis. In terms of biological role, may catalyze the final step in cell wall teichoic acid biosynthesis, the transfer of the anionic cell wall polymers (APs) from their lipid-linked precursor to the cell wall peptidoglycan (PG). The chain is Polyisoprenyl-teichoic acid--peptidoglycan teichoic acid transferase TagU from Oceanobacillus iheyensis (strain DSM 14371 / CIP 107618 / JCM 11309 / KCTC 3954 / HTE831).